A 77-amino-acid polypeptide reads, in one-letter code: uncharacterized protein (77 aa).

2 disordered regions span residues 1–34 (MSRA…TKMN) and 56–77 (LDGD…FSGR). Residues 8–20 (DNDKGWAKKKGAD) show a composition bias toward basic and acidic residues. Basic residues predominate over residues 25–34 (PRPHKQTKMN). The span at 56-70 (LDGDIRRGGNKKSER) shows a compositional bias: basic and acidic residues.

This is an uncharacterized protein from Dictyostelium discoideum (Social amoeba).